Consider the following 106-residue polypeptide: MAEEHSNQRSQTFNGERTNRPSRKPRGDGERRGRRQGGRRRVDYLAVNHIDYVDYKDTELLQRFIADNGKILPRRITGTSSKNQRKIATAIKRARIMALLPFVANN.

The disordered stretch occupies residues methionine 1–arginine 41.

This sequence belongs to the bacterial ribosomal protein bS18 family. In terms of assembly, part of the 30S ribosomal subunit. Forms a tight heterodimer with protein bS6.

Functionally, binds as a heterodimer with protein bS6 to the central domain of the 16S rRNA, where it helps stabilize the platform of the 30S subunit. This chain is Small ribosomal subunit protein bS18, found in Oenococcus oeni (strain ATCC BAA-331 / PSU-1).